The primary structure comprises 384 residues: MNSSQKRVLHVLSGMNRGGAETMVMNLYRKMDKSKVQFDFLTYRNDPCAYDEEILSLGGRLFYVPSIGQSNPLTFVRNVRNAIKENGPFSAVHAHTDFQTGFIALAARLAGVPVRVCHSHNTSWKTGFNWKDRLQLLVFRRLILANATALCACGEDAGRFLFGQSNMERERVHLLPNGIDLELFAPNGQAADEEKAARGIAADRLIIGHVARFHEVKNHAFLLKLAAHLKERGIRFQLVLAGDGPLCGEIEEEARQQNLLSDVLFLGTEERIHELMRTFDVFVMPSLYEGLPVVLVEAQASGLPCIISDSITEKVDAGLGLVTRLSLSEPISVWAETIARAAAAGRPKREFIKETLAQLGYDAQQNVGALLNVYNISTEKDHNR.

The protein belongs to the glycosyltransferase group 1 family. Glycosyltransferase 4 subfamily.

May be involved in the production of the exopolysaccharide (EPS) component of the extracellular matrix during biofilm formation. EPS is responsible for the adhesion of chains of cells into bundles. Required for biofilm maintenance. The protein is Putative glycosyltransferase EpsF (epsF) of Bacillus subtilis (strain 168).